A 387-amino-acid chain; its full sequence is Double C2-like domain-containing protein gamma (387 aa).

2 consecutive C2 domains span residues 83 to 209 (ALGT…DICL) and 243 to 376 (ERGR…ELWH). 5 residues coordinate Ca(2+): D274, D280, D334, D336, and D342.

It depends on Ca(2+) as a cofactor.

Functionally, may be involved in regulation of vesicular trafficking. In vitro, does not bind calcium and phospholipids. The protein is Double C2-like domain-containing protein gamma (Doc2g) of Mus musculus (Mouse).